We begin with the raw amino-acid sequence, 867 residues long: Nuclear body protein SP140 (867 aa).

The HSR domain maps to 22–138; the sequence is VAEIQNVEGQ…IYRSFQNVCY (117 aa). Disordered stretches follow at residues 260-341, 365-432, and 486-580; these read TYST…EEPQ, TPQV…SEEL, and IANN…KHKD. Basic and acidic residues predominate over residues 268-301; the sequence is KQGEEEGRNSPRKRNQDKEKYQESPEGRDKETFD. Acidic residues-rich tracts occupy residues 323–341 and 384–397; these read EGEE…EEPQ and EGEE…EMCD. The segment covering 404–416 has biased composition (low complexity); that stretch reads ASSSLARRGSVSS. Composition is skewed to basic residues over residues 494 to 512 and 567 to 577; these read KPKR…RMRM and QKRVRSRASRK. The short motif at 495–514 is the Nuclear localization signal element; the sequence is PKRKRRKKRGHGWSRMRMRR. The SAND domain occupies 580–661; sequence DETVDFKAPL…RWLMENGFLP (82 aa). A PHD-type zinc finger spans residues 690–736; sequence LDECEVCRDGGELFCCDTCSRVFHEDCHIPPVEAERTPWNCIFCRMK. Phosphothreonine is present on threonine 726. The Bromo domain occupies 754-857; the sequence is QMCPEEQLKC…AEFEKNFKEV (104 aa).

Interacts with PIN1. Post-translationally, phosphorylation at Thr-726 promotes binding of PIN1 and subsequent isomerization of Pro-727. In terms of tissue distribution, high levels in spleen and peripheral blood leukocytes, much lower levels in tonsils, thymus, prostate, ovary, small intestine, and colon. Very low levels in heart, brain, placenta, lung, liver, skeletal muscle, kidney, and pancreas. Not detected in brain, liver and muscle.

Its subcellular location is the nucleus. It is found in the PML body. The protein resides in the cytoplasm. In terms of biological role, component of the nuclear body, also known as nuclear domain 10, PML oncogenic domain, and KR body. May be involved in the pathogenesis of acute promyelocytic leukemia and viral infection. May play a role in chromatin-mediated regulation of gene expression although it does not bind to histone H3 tails. The polypeptide is Nuclear body protein SP140 (Homo sapiens (Human)).